We begin with the raw amino-acid sequence, 466 residues long: Alpha-1,3-mannosyltransferase CMT1 (466 aa).

The interval 1 to 23 (MFRNTLRTFPRPATPSLPTSSHS) is disordered. Residues 1–33 (MFRNTLRTFPRPATPSLPTSSHSPIARASLSKS) are Cytoplasmic-facing. A helical; Signal-anchor for type II membrane protein membrane pass occupies residues 34 to 54 (PLFVLSLVLVCIFFLSFLSHP). The Lumenal portion of the chain corresponds to 55 to 466 (DPSARKLQWP…ETRWVQPWLE (412 aa)).

Mg(2+) is required as a cofactor. It depends on Mn(2+) as a cofactor. Co(2+) serves as cofactor.

It is found in the golgi apparatus membrane. The protein operates within protein modification; protein glycosylation. Responsible for addition of mannose residues in an alpha-1,3 linkage to a polymannosly precursor. May be involved in synthesis of capsule glucuronoxylomannan. This Cryptococcus neoformans var. neoformans serotype D (strain JEC21 / ATCC MYA-565) (Filobasidiella neoformans) protein is Alpha-1,3-mannosyltransferase CMT1.